Reading from the N-terminus, the 409-residue chain is Broad specificity amino-acid racemase (409 aa).

The signal sequence occupies residues 1 to 24; it reads MPFRRTLLAASLVLLITGQAPLYA. Cys71 and Cys97 are joined by a disulfide. Lys75 acts as the Proton acceptor in catalysis. An N6-(pyridoxal phosphate)lysine modification is found at Lys75. Arg174 lines the substrate pocket. Tyr301 (proton acceptor) is an active-site residue. Residue Met349 coordinates substrate.

It belongs to the alanine racemase family. Bsr subfamily. In terms of assembly, monomer. Forms a head-to-tail homodimer in the structure. Requires pyridoxal 5'-phosphate as cofactor.

It is found in the periplasm. It catalyses the reaction an L-alpha-amino acid = a D-alpha-amino acid. The enzyme catalyses L-lysine = D-lysine. The catalysed reaction is L-arginine = D-arginine. It carries out the reaction L-alanine = D-alanine. Activity is enhanced by Co(2+), Mn(2+) and Sr(2+), and decreased by Cu(2+). Amino-acid racemase that catalyzes the interconversion of L-lysine and D-lysine, and L-arginine and D-arginine. To a lesser extent, is also able to interconvert alanine and isoleucine enantiomers. This is Broad specificity amino-acid racemase from Pseudomonas putida (Arthrobacter siderocapsulatus).